A 41-amino-acid polypeptide reads, in one-letter code: MKVVSSLKSLKKRDKDCQIVQRRGKIFVINKKNKRFKAKQG.

The protein belongs to the bacterial ribosomal protein bL36 family.

This Rickettsia massiliae (strain Mtu5) protein is Large ribosomal subunit protein bL36.